The primary structure comprises 144 residues: Large ribosomal subunit protein uL15 (144 aa).

Residues 1–51 (MQLNTLSPAQGEKKSRKRVGRGIGSGIGKTCGSGHKGQKSRSGGFNKIGFE) form a disordered region. Residues 21-35 (RGIGSGIGKTCGSGH) are compositionally biased toward gly residues.

The protein belongs to the universal ribosomal protein uL15 family. As to quaternary structure, part of the 50S ribosomal subunit.

Its function is as follows. Binds to the 23S rRNA. The chain is Large ribosomal subunit protein uL15 from Vesicomyosocius okutanii subsp. Calyptogena okutanii (strain HA).